We begin with the raw amino-acid sequence, 505 residues long: Cholesteryl ester transfer protein (505 aa).

The N-terminal stretch at 1-24 (MLWAGGMRLGMARILLMLVHAAAA) is a signal peptide. Residues asparagine 68 and asparagine 114 are each glycosylated (N-linked (GlcNAc...) asparagine). Cysteine 169 and cysteine 210 form a disulfide bridge. N-linked (GlcNAc...) asparagine glycosylation is found at asparagine 266, asparagine 344, and asparagine 422.

Belongs to the BPI/LBP/Plunc superfamily. BPI/LBP family. As to expression, highly expressed in liver brain, heart, and spleen. Secreted in plasma.

It is found in the secreted. It carries out the reaction cholesteryl (9Z-octadecenoate)(in) = cholesteryl (9Z-octadecenoate)(out). The enzyme catalyses 1,2,3-tri-(9Z-octadecenoyl)-glycerol(in) = 1,2,3-tri-(9Z-octadecenoyl)-glycerol(out). It catalyses the reaction cholesteryl (9Z,12Z)-octadecadienoate(in) = cholesteryl (9Z,12Z)-octadecadienoate(out). In terms of biological role, involved in the transfer of neutral lipids, including cholesteryl ester and triglyceride, among lipoprotein particles. Allows the net movement of cholesteryl ester from high density lipoproteins/HDL to triglyceride-rich very low density lipoproteins/VLDL, and the equimolar transport of triglyceride from VLDL to HDL. Regulates the reverse cholesterol transport, by which excess cholesterol is removed from peripheral tissues and returned to the liver for elimination. The sequence is that of Cholesteryl ester transfer protein from Gallus gallus (Chicken).